The sequence spans 258 residues: Putative cysteine-rich repeat secretory protein 16 (258 aa).

An N-terminal signal peptide occupies residues 1–30; it reads MYYSSPTCFVLITIFAVVVTQLIFMRTVSS. 2 Gnk2-homologous domains span residues 37–139 and 144–247; these read YLNH…PFDT and DKDN…LYPF.

The protein belongs to the cysteine-rich repeat secretory protein family.

It localises to the secreted. The chain is Putative cysteine-rich repeat secretory protein 16 (CRRSP16) from Arabidopsis thaliana (Mouse-ear cress).